Here is a 181-residue protein sequence, read N- to C-terminus: uncharacterized protein (181 aa).

The first 23 residues, 1–23 (MKKCLLFLTTIALILSLSTNAFA), serve as a signal peptide directing secretion.

This is an uncharacterized protein from Bacillus subtilis (strain 168).